Here is a 259-residue protein sequence, read N- to C-terminus: Deoxyribose-phosphate aldolase (259 aa).

Aspartate 102 serves as the catalytic Proton donor/acceptor. The Schiff-base intermediate with acetaldehyde role is filled by lysine 166. Lysine 200 (proton donor/acceptor) is an active-site residue.

The protein belongs to the DeoC/FbaB aldolase family. DeoC type 2 subfamily.

The protein resides in the cytoplasm. The enzyme catalyses 2-deoxy-D-ribose 5-phosphate = D-glyceraldehyde 3-phosphate + acetaldehyde. It participates in carbohydrate degradation; 2-deoxy-D-ribose 1-phosphate degradation; D-glyceraldehyde 3-phosphate and acetaldehyde from 2-deoxy-alpha-D-ribose 1-phosphate: step 2/2. Functionally, catalyzes a reversible aldol reaction between acetaldehyde and D-glyceraldehyde 3-phosphate to generate 2-deoxy-D-ribose 5-phosphate. The polypeptide is Deoxyribose-phosphate aldolase (Vibrio cholerae serotype O1 (strain ATCC 39315 / El Tor Inaba N16961)).